Reading from the N-terminus, the 277-residue chain is Formamidopyrimidine-DNA glycosylase (277 aa).

Proline 2 functions as the Schiff-base intermediate with DNA in the catalytic mechanism. Glutamate 3 acts as the Proton donor in catalysis. The Proton donor; for beta-elimination activity role is filled by lysine 60. DNA is bound by residues histidine 94, arginine 113, and arginine 158. The FPG-type zinc-finger motif lies at 243 to 277 (WVYNRAGEPCKVCGDVIQRIKLGGRSSHFCRQCQV). The active-site Proton donor; for delta-elimination activity is the arginine 267.

This sequence belongs to the FPG family. In terms of assembly, monomer. Zn(2+) serves as cofactor.

The catalysed reaction is Hydrolysis of DNA containing ring-opened 7-methylguanine residues, releasing 2,6-diamino-4-hydroxy-5-(N-methyl)formamidopyrimidine.. It carries out the reaction 2'-deoxyribonucleotide-(2'-deoxyribose 5'-phosphate)-2'-deoxyribonucleotide-DNA = a 3'-end 2'-deoxyribonucleotide-(2,3-dehydro-2,3-deoxyribose 5'-phosphate)-DNA + a 5'-end 5'-phospho-2'-deoxyribonucleoside-DNA + H(+). In terms of biological role, involved in base excision repair of DNA damaged by oxidation or by mutagenic agents. Acts as a DNA glycosylase that recognizes and removes damaged bases. Has a preference for oxidized purines, such as 7,8-dihydro-8-oxoguanine (8-oxoG). Has AP (apurinic/apyrimidinic) lyase activity and introduces nicks in the DNA strand. Cleaves the DNA backbone by beta-delta elimination to generate a single-strand break at the site of the removed base with both 3'- and 5'-phosphates. This Trichormus variabilis (strain ATCC 29413 / PCC 7937) (Anabaena variabilis) protein is Formamidopyrimidine-DNA glycosylase.